The primary structure comprises 426 residues: MAKQKALQAIRGMNDCLPSETNIWQMVETVLRRVASNYGFAEIRMPIVESTALFKRGIGEVTDIVEKEMYTFDDLNGDSLTLRPEGTASCVRAGNQHGLLYNQEQRLWYMGPMFRHERPQKGRYRQFHQFGLEAFGIATPDIDAEIILLTSRLWRELGINEFVTLELNSLGSNEERANYREALIAYLLEHEELLDEDSKRRMHTNPLRVLDSKNPQVQEALTNAPKLSDHFGEETQTHFDTLCARLDAAGINYVLNERLVRGLDYYNRTVFEWVTTTLGAQGTICAGGRYDGLVEQLGGKATPAFGFALGIERLVLMLTELEKVTNIRPQVDAYVVILGDDAQVAANKLAEQWRDQVPEIRLQCHCGGGNMKKQLKRADKSGAQIALILGDDEITQEKVMVKYLRGQKEQESIEFTQVSSLLSELI.

This sequence belongs to the class-II aminoacyl-tRNA synthetase family. Homodimer.

Its subcellular location is the cytoplasm. The catalysed reaction is tRNA(His) + L-histidine + ATP = L-histidyl-tRNA(His) + AMP + diphosphate + H(+). This chain is Histidine--tRNA ligase, found in Colwellia psychrerythraea (strain 34H / ATCC BAA-681) (Vibrio psychroerythus).